The chain runs to 285 residues: Undecaprenyl-diphosphatase (285 aa).

The next 7 membrane-spanning stretches (helical) occupy residues 12-34 (IVIA…HAVI), 49-69 (IFLP…LVYF), 93-113 (IHIL…GGLL), 120-140 (LFGT…LLLL), 159-179 (LTYA…LPGI), 234-254 (VATI…AFLM), and 263-283 (WALS…FFIL).

The protein belongs to the UppP family.

It localises to the cell inner membrane. The catalysed reaction is di-trans,octa-cis-undecaprenyl diphosphate + H2O = di-trans,octa-cis-undecaprenyl phosphate + phosphate + H(+). Functionally, catalyzes the dephosphorylation of undecaprenyl diphosphate (UPP). Confers resistance to bacitracin. The sequence is that of Undecaprenyl-diphosphatase from Gluconacetobacter diazotrophicus (strain ATCC 49037 / DSM 5601 / CCUG 37298 / CIP 103539 / LMG 7603 / PAl5).